The chain runs to 688 residues: Polyribonucleotide nucleotidyltransferase (688 aa).

Mg(2+)-binding residues include D484 and D490. The KH domain maps to 550-609 (PTTEIFNVAPDKIVEIIGQGGRVIREIVEKFEVKIDLNKPSGEVKIMGNKERVLKTKEFI). The 63-residue stretch at 626–688 (DEVLEAQVKR…NKGKIALDLA (63 aa)) folds into the S1 motif domain.

This sequence belongs to the polyribonucleotide nucleotidyltransferase family. Mg(2+) is required as a cofactor.

The protein resides in the cytoplasm. It catalyses the reaction RNA(n+1) + phosphate = RNA(n) + a ribonucleoside 5'-diphosphate. Its function is as follows. Involved in mRNA degradation. Catalyzes the phosphorolysis of single-stranded polyribonucleotides processively in the 3'- to 5'-direction. The sequence is that of Polyribonucleotide nucleotidyltransferase from Helicobacter pylori (strain Shi470).